The chain runs to 120 residues: Large ribosomal subunit protein uL29 (120 aa).

It belongs to the universal ribosomal protein uL29 family. As to quaternary structure, component of the large ribosomal subunit. Mature ribosomes consist of a small (40S) and a large (60S) subunit. The 40S subunit contains about 32 different proteins and 1 molecule of RNA (18S). The 60S subunit contains 45 different proteins and 3 molecules of RNA (25S, 5.8S and 5S).

It localises to the cytoplasm. Component of the ribosome, a large ribonucleoprotein complex responsible for the synthesis of proteins in the cell. The small ribosomal subunit (SSU) binds messenger RNAs (mRNAs) and translates the encoded message by selecting cognate aminoacyl-transfer RNA (tRNA) molecules. The large subunit (LSU) contains the ribosomal catalytic site termed the peptidyl transferase center (PTC), which catalyzes the formation of peptide bonds, thereby polymerizing the amino acids delivered by tRNAs into a polypeptide chain. The nascent polypeptides leave the ribosome through a tunnel in the LSU and interact with protein factors that function in enzymatic processing, targeting, and the membrane insertion of nascent chains at the exit of the ribosomal tunnel. The chain is Large ribosomal subunit protein uL29 from Candida albicans (strain SC5314 / ATCC MYA-2876) (Yeast).